The sequence spans 311 residues: Ribosomal RNA small subunit methyltransferase H 1 (311 aa).

S-adenosyl-L-methionine is bound by residues 33-35 (AGH), aspartate 53, phenylalanine 80, aspartate 101, and glutamine 108.

It belongs to the methyltransferase superfamily. RsmH family.

It localises to the cytoplasm. The enzyme catalyses cytidine(1402) in 16S rRNA + S-adenosyl-L-methionine = N(4)-methylcytidine(1402) in 16S rRNA + S-adenosyl-L-homocysteine + H(+). Its function is as follows. Specifically methylates the N4 position of cytidine in position 1402 (C1402) of 16S rRNA. The polypeptide is Ribosomal RNA small subunit methyltransferase H 1 (Alkaliphilus metalliredigens (strain QYMF)).